A 245-amino-acid chain; its full sequence is Carboxy-S-adenosyl-L-methionine synthase (245 aa).

Residues Y42, 67–69, 92–93, 120–121, N135, and R202 contribute to the S-adenosyl-L-methionine site; these read GCS, DN, and DI.

Belongs to the class I-like SAM-binding methyltransferase superfamily. Cx-SAM synthase family. Homodimer.

The enzyme catalyses prephenate + S-adenosyl-L-methionine = carboxy-S-adenosyl-L-methionine + 3-phenylpyruvate + H2O. Catalyzes the conversion of S-adenosyl-L-methionine (SAM) to carboxy-S-adenosyl-L-methionine (Cx-SAM). The polypeptide is Carboxy-S-adenosyl-L-methionine synthase (Vibrio parahaemolyticus serotype O3:K6 (strain RIMD 2210633)).